The following is an 809-amino-acid chain: Leucine--tRNA ligase (809 aa).

The 'HIGH' region motif lies at 40–50 (PYPSGRIHMGH). The 'KMSKS' region motif lies at 579–583 (KMSKS). An ATP-binding site is contributed by lysine 582.

Belongs to the class-I aminoacyl-tRNA synthetase family.

It is found in the cytoplasm. The catalysed reaction is tRNA(Leu) + L-leucine + ATP = L-leucyl-tRNA(Leu) + AMP + diphosphate. This is Leucine--tRNA ligase from Campylobacter jejuni subsp. jejuni serotype O:23/36 (strain 81-176).